We begin with the raw amino-acid sequence, 231 residues long: Ion-translocating oxidoreductase complex subunit E (231 aa).

The next 7 helical transmembrane spans lie at 18 to 38, 39 to 59, 69 to 89, 93 to 113, 127 to 147, 157 to 177, and 182 to 202; these read GLVQ…ITNA, LGLG…VSLV, IPVF…LINA, NLYL…VIIG, SAFD…VLGA, LFGG…IHVW, and PFLL…LIAL.

It belongs to the NqrDE/RnfAE family. In terms of assembly, the complex is composed of six subunits: RnfA, RnfB, RnfC, RnfD, RnfE and RnfG.

The protein resides in the cell inner membrane. Its function is as follows. Part of a membrane-bound complex that couples electron transfer with translocation of ions across the membrane. The chain is Ion-translocating oxidoreductase complex subunit E from Shewanella frigidimarina (strain NCIMB 400).